A 248-amino-acid chain; its full sequence is Probable transcriptional regulatory protein Atu3727 (248 aa).

The disordered stretch occupies residues 1 to 21 (MAGHSQFKNIMHRKGKQDSVR).

It belongs to the TACO1 family.

It is found in the cytoplasm. The chain is Probable transcriptional regulatory protein Atu3727 from Agrobacterium fabrum (strain C58 / ATCC 33970) (Agrobacterium tumefaciens (strain C58)).